An 863-amino-acid chain; its full sequence is MRLALLWALGLLGAGSPLPSWPLPNIGGTEEQQAESEKAPREPLEPQVLQDDLPISLKKVLQTSLPEPLRIKLELDGDSHILELLQNRELVPGRPTLVWYQPDGTRVVSEGHTLENCCYQGRVRGYAGSWVSICTCSGLRGLVVLTPERSYTLEQGPGDLQGPPIISRIQDLHLPGHTCALSWRESVHTQKPPEHPLGQRHIRRRRDVVTETKTVELVIVADHSEAQKYRDFQHLLNRTLEVALLLDTFFRPLNVRVALVGLEAWTQRDLVEISPNPAVTLENFLHWRRAHLLPRLPHDSAQLVTGTSFSGPTVGMAIQNSICSPDFSGGVNMDHSTSILGVASSIAHELGHSLGLDHDLPGNSCPCPGPAPAKTCIMEASTDFLPGLNFSNCSRRALEKALLDGMGSCLFERLPSLPPMAAFCGNMFVEPGEQCDCGFLDDCVDPCCDSLTCQLRPGAQCASDGPCCQNCQLRPSGWQCRPTRGDCDLPEFCPGDSSQCPPDVSLGDGEPCAGGQAVCMHGRCASYAQQCQSLWGPGAQPAAPLCLQTANTRGNAFGSCGRNPSGSYVSCTPRDAICGQLQCQTGRTQPLLGSIRDLLWETIDVNGTELNCSWVHLDLGSDVAQPLLTLPGTACGPGLVCIDHRCQRVDLLGAQECRSKCHGHGVCDSNRHCYCEEGWAPPDCTTQLKATSSLTTGLLLSLLVLLVLVMLGASYWYRARLHQRLCQLKGPTCQYRAAQSGPSERPGPPQRALLARGTKQASALSFPAPPSRPLPPDPVSKRLQAELADRPNPPTRPLPADPVVRSPKSQGPAKPPPPRKPLPADPQGRCPSGDLPGPGAGIPPLVVPSRPAPPPPTVSSLYL.

An N-terminal signal peptide occupies residues 1-17; the sequence is MRLALLWALGLLGAGSP. Residues 18–206 constitute a propeptide that is removed on maturation; that stretch reads LPSWPLPNIG…LGQRHIRRRR (189 aa). Residues 22–45 are disordered; that stretch reads PLPNIGGTEEQQAESEKAPREPLE. Positions 35–44 are enriched in basic and acidic residues; that stretch reads ESEKAPREPL. Residues 177–184 carry the Cysteine switch motif; sequence HTCALSWR. Cys179 serves as a coordination point for Zn(2+). Topologically, residues 207 to 696 are extracellular; it reads DVVTETKTVE…QLKATSSLTT (490 aa). The Peptidase M12B domain occupies 213–414; it reads KTVELVIVAD…GMGSCLFERL (202 aa). Residue Asn237 is glycosylated (N-linked (GlcNAc...) asparagine). Cystine bridges form between Cys323/Cys409, Cys365/Cys393, Cys367/Cys376, and Cys480/Cys500. A Zn(2+)-binding site is contributed by His348. Glu349 is an active-site residue. Zn(2+)-binding residues include His352 and His358. N-linked (GlcNAc...) asparagine glycosylation is found at Asn389 and Asn392. The region spanning 421 to 508 is the Disintegrin domain; the sequence is AAFCGNMFVE…QCPPDVSLGD (88 aa). The Cell attachment site signature appears at 484-486; it reads RGD. N-linked (GlcNAc...) asparagine glycosylation is found at Asn606 and Asn611. 3 cysteine pairs are disulfide-bonded: Cys657–Cys667, Cys661–Cys673, and Cys675–Cys684. Residues 657–685 form the EGF-like domain; the sequence is CRSKCHGHGVCDSNRHCYCEEGWAPPDCT. Residues 697 to 717 form a helical membrane-spanning segment; sequence GLLLSLLVLLVLVMLGASYWY. Phosphotyrosine; by HCK and LCK occurs at positions 715 and 735. The Cytoplasmic portion of the chain corresponds to 718–863; the sequence is RARLHQRLCQ…PPPTVSSLYL (146 aa). The disordered stretch occupies residues 736–863; sequence RAAQSGPSER…PPPTVSSLYL (128 aa). Over residues 767–778 the composition is skewed to pro residues; that stretch reads PAPPSRPLPPDP. The span at 779 to 789 shows a compositional bias: basic and acidic residues; the sequence is VSKRLQAELAD. 2 stretches are compositionally biased toward pro residues: residues 791 to 800 and 813 to 824; these read PNPPTRPLPA and AKPPPPRKPLPA. 2 short sequence motifs (SH3-binding) span residues 815-821 and 850-856; these read PPPPRKP and RPAPPPP.

As to quaternary structure, interacts with ITAGV-ITGB3 (vitronectin receptor). Interacts with SH3GL2 and SNX9; this interaction occurs preferentially with ADAM15 precursor, rather than the processed form, suggesting it occurs in a secretory pathway compartment prior to the medial Golgi. Interacts with ITAG9-ITGB1. Interacts specifically with Src family protein-tyrosine kinases (PTKs). Interacts with SH3PXD2A. Interacts with ITAGV-ITGB1. Interacts with GRB2, HCK, ITSN1, ITSN2, LYN, MAPK1, MAPK3, NCF1, NCK1, nephrocystin, PTK6, SNX33, LCK and SRC. Zn(2+) is required as a cofactor. Post-translationally, the precursor is cleaved by a furin endopeptidase. In terms of processing, phosphorylation increases association with PTKs. In terms of tissue distribution, expressed in colon and small intestine. Expressed in airway smooth muscle and glomerular mesangial cells (at protein level). Ubiquitously expressed. Overexpressed in atherosclerotic lesions. Constitutively expressed in cultured endothelium and smooth muscle. Expressed in chondrocytes. Expressed in airway smooth muscle and glomerular mesangial cells.

The protein resides in the endomembrane system. Its subcellular location is the cell junction. It is found in the adherens junction. The protein localises to the cell projection. It localises to the cilium. The protein resides in the flagellum. Its subcellular location is the cytoplasmic vesicle. It is found in the secretory vesicle. The protein localises to the acrosome. Inhibited by hydroxamate-type metalloproteinase inhibitors such as marimastat. Inhibited by metalloproteinase inhibitor 2 (TIMP-2) and TIMP-3 at nanomolar concentrations. Not significantly inhibited by TIMP-1 at concentrations of up to 100 nM. Not activated by PMA or ionomycin. Functionally, active metalloproteinase with gelatinolytic and collagenolytic activity. Plays a role in the wound healing process. Mediates both heterotypic intraepithelial cell/T-cell interactions and homotypic T-cell aggregation. Inhibits beta-1 integrin-mediated cell adhesion and migration of airway smooth muscle cells. Suppresses cell motility on or towards fibronectin possibly by driving alpha-v/beta-1 integrin (ITAGV-ITGB1) cell surface expression via ERK1/2 inactivation. Cleaves E-cadherin in response to growth factor deprivation. Plays a role in glomerular cell migration. Plays a role in pathological neovascularization. May play a role in cartilage remodeling. May be proteolytically processed, during sperm epididymal maturation and the acrosome reaction. May play a role in sperm-egg binding through its disintegrin domain. The chain is Disintegrin and metalloproteinase domain-containing protein 15 (ADAM15) from Homo sapiens (Human).